Consider the following 201-residue polypeptide: 3-isopropylmalate dehydratase small subunit (201 aa).

This sequence belongs to the LeuD family. LeuD type 1 subfamily. Heterodimer of LeuC and LeuD.

It catalyses the reaction (2R,3S)-3-isopropylmalate = (2S)-2-isopropylmalate. Its pathway is amino-acid biosynthesis; L-leucine biosynthesis; L-leucine from 3-methyl-2-oxobutanoate: step 2/4. Its function is as follows. Catalyzes the isomerization between 2-isopropylmalate and 3-isopropylmalate, via the formation of 2-isopropylmaleate. The sequence is that of 3-isopropylmalate dehydratase small subunit from Glaesserella parasuis serovar 5 (strain SH0165) (Haemophilus parasuis).